Consider the following 320-residue polypeptide: o-succinylbenzoate synthase (320 aa).

Lys133 (proton donor) is an active-site residue. 3 residues coordinate Mg(2+): Asp161, Glu190, and Asp213. The Proton acceptor role is filled by Lys235.

This sequence belongs to the mandelate racemase/muconate lactonizing enzyme family. MenC type 1 subfamily. A divalent metal cation is required as a cofactor.

It catalyses the reaction (1R,6R)-6-hydroxy-2-succinyl-cyclohexa-2,4-diene-1-carboxylate = 2-succinylbenzoate + H2O. It functions in the pathway quinol/quinone metabolism; 1,4-dihydroxy-2-naphthoate biosynthesis; 1,4-dihydroxy-2-naphthoate from chorismate: step 4/7. Its pathway is quinol/quinone metabolism; menaquinone biosynthesis. Functionally, converts 2-succinyl-6-hydroxy-2,4-cyclohexadiene-1-carboxylate (SHCHC) to 2-succinylbenzoate (OSB). The sequence is that of o-succinylbenzoate synthase from Salmonella newport (strain SL254).